The sequence spans 409 residues: Casein kinase I isoform delta-B (409 aa).

A Protein kinase domain is found at 9–277 (YRLGRKIGSG…YLRQLFRNLF (269 aa)). Residues 15 to 23 (IGSGSFGDI) and Lys-38 each bind ATP. The active-site Proton acceptor is Asp-128. The span at 300-315 (TAEEADRERRERDERM) shows a compositional bias: basic and acidic residues. Residues 300–409 (TAEEADRERR…NSIPFDHHGK (110 aa)) are disordered. The autoinhibitory stretch occupies residues 317–341 (HSRNPAARGIPAASGRPRPTQDGAP). 2 stretches are compositionally biased toward polar residues: residues 346–358 (TPTS…SSPR) and 380–402 (NVSS…QNSI).

This sequence belongs to the protein kinase superfamily. As to quaternary structure, monomer. Interacts with per1 and per2. Component of the circadian core oscillator. Autophosphorylated on serine and threonine residues.

The protein resides in the cytoplasm. It is found in the nucleus. The enzyme catalyses L-seryl-[protein] + ATP = O-phospho-L-seryl-[protein] + ADP + H(+). The catalysed reaction is L-threonyl-[protein] + ATP = O-phospho-L-threonyl-[protein] + ADP + H(+). Its activity is regulated as follows. Exhibits substrate-dependent heparin activation. Functionally, casein kinases are operationally defined by their preferential utilization of acidic proteins such as caseins as substrates. Central component of the circadian clock. May act as a negative regulator of circadian rhythmicity by phosphorylating per1 and per2, which may lead to their degradation. Participates in wnt signaling. In Danio rerio (Zebrafish), this protein is Casein kinase I isoform delta-B (csnk1db).